We begin with the raw amino-acid sequence, 102 residues long: Small ribosomal subunit protein uS10 (102 aa).

It belongs to the universal ribosomal protein uS10 family. In terms of assembly, part of the 30S ribosomal subunit.

In terms of biological role, involved in the binding of tRNA to the ribosomes. The chain is Small ribosomal subunit protein uS10 from Nitrosospira multiformis (strain ATCC 25196 / NCIMB 11849 / C 71).